The primary structure comprises 146 residues: MGRFIFVSFGLLVVFLSLSGTGADCPSDWSSYEGHCYRVFQQQMNWADAEKFCTQQRKESHLVSFESSEEVDFVVSKTFPILKENFVWIGLSNVWNGCRLQWSDGTELKYNAWSAESECIASKTTDNQWWSMDCSKTYPFVCKLIV.

The N-terminal stretch at 1-23 is a signal peptide; sequence MGRFIFVSFGLLVVFLSLSGTGA. 3 cysteine pairs are disulfide-bonded: C25/C36, C53/C142, and C119/C134. The C-type lectin domain maps to 32-143; sequence YEGHCYRVFQ…CSKTYPFVCK (112 aa).

Belongs to the snaclec family. As to quaternary structure, heterodimer of subunits alpha and beta; disulfide-linked. In terms of tissue distribution, expressed by the venom gland.

It localises to the secreted. Functionally, snaclec that dose-dependently inhibits platelet aggregation induced by ristocetin or low-dose thrombin, but not by high-dose thrombin. Binds to GPIbalpha (GP1BA). In vivo, also dose-dependently induces thrombocytopenia of mice and platelet counts remains at very low level even after 18 hours intravenous injection. In Protobothrops jerdonii (Jerdon's pitviper), this protein is Snaclec jerdonibitin subunit beta.